Here is a 738-residue protein sequence, read N- to C-terminus: AP-4 complex subunit beta-1 (738 aa).

The interval 534–600 is hinge; that stretch reads CSPKSDPSLG…NASFATSGHL (67 aa). The tract at residues 601-738 is ear; mediates interaction with TEPSIN; sequence ISEENKEGAQ…VIGTVGDIKS (138 aa).

Belongs to the adaptor complexes large subunit family. In terms of assembly, adaptor protein complex 4 (AP-4) is a heterotetramer composed of two large adaptins (epsilon-type subunit AP4E1 and beta-type subunit AP4B1), a medium adaptin (mu-type subunit AP4M1) and a small adaptin (sigma-type AP4S1). Interacts with TEPSIN; this interaction requires the presence of a functional AP-4 complex. Interacts with GRIA2; probably indirect it mediates the somatodendritic localization of GRIA2 in neurons.

Its subcellular location is the golgi apparatus. The protein localises to the trans-Golgi network membrane. Component of the adaptor protein complex 4 (AP-4). Adaptor protein complexes are vesicle coat components involved both in vesicle formation and cargo selection. They control the vesicular transport of proteins in different trafficking pathways. AP-4 forms a non clathrin-associated coat on vesicles departing the trans-Golgi network (TGN) and may be involved in the targeting of proteins from the trans-Golgi network (TGN) to the endosomal-lysosomal system. It is also involved in protein sorting to the basolateral membrane in epithelial cells and the proper asymmetric localization of somatodendritic proteins in neurons. AP-4 is involved in the recognition and binding of tyrosine-based sorting signals found in the cytoplasmic part of cargos, but may also recognize other types of sorting signal. The chain is AP-4 complex subunit beta-1 from Mus musculus (Mouse).